Here is a 680-residue protein sequence, read N- to C-terminus: Forkhead box protein P4 (680 aa).

Residues 1-17 are compositionally biased toward polar residues; it reads MMVESASETIRSAPSGQ. The segment at 1–56 is disordered; that stretch reads MMVESASETIRSAPSGQNGVGSLSGQADGSSGGATGTTASGTGREVTTGADSNGEM. Ser-52 and Ser-86 each carry phosphoserine. Residues Lys-175 and Lys-246 each participate in a glycyl lysine isopeptide (Lys-Gly) (interchain with G-Cter in SUMO2) cross-link. A disordered region spans residues 262-306; it reads FAAPPKVSPPLSHHTLPNGQPTVLTSRRDSSSHEETPGSHPLYGH. Residues 276-286 are compositionally biased toward polar residues; it reads TLPNGQPTVLT. Residues 287-298 show a composition bias toward basic and acidic residues; that stretch reads SRRDSSSHEETP. A C2H2-type zinc finger spans residues 307–332; it reads GECKWPGCETLCEDLGQFIKHLNTEH. The segment at 349 to 370 is leucine-zipper; that stretch reads VQQLEIQLAKESERLQAMMAHL. Residue Lys-378 forms a Glycyl lysine isopeptide (Lys-Gly) (interchain with G-Cter in SUMO2) linkage. Residues 407–445 form a disordered region; it reads GLVHPPTSAAAPVTPLRPPGLGSASLHGGGPARRRSSDK. The segment at residues 467-559 is a DNA-binding region (fork-head); the sequence is RPPFTYASLI…KMTGSPTLVK (93 aa). Ser-554 is subject to Phosphoserine. A disordered region spans residues 602–680; that stretch reads PLSHDDVGAP…EEELPGEELS (79 aa). Residues 617–635 are compositionally biased toward polar residues; that stretch reads SNGSSSPPRLSPPQYSHQV. The segment covering 668–680 has biased composition (acidic residues); sequence RDLEEELPGEELS.

In terms of assembly, forms homodimers and heterodimers with FOXP1 and FOXP2. Dimerization is required for DNA-binding.

The protein resides in the nucleus. In terms of biological role, transcriptional repressor that represses lung-specific expression. This chain is Forkhead box protein P4 (FOXP4), found in Homo sapiens (Human).